A 601-amino-acid chain; its full sequence is Proteasome-associated ATPase (601 aa).

Residues 1–15 (MSGPRSGSGSGGSTG) show a composition bias toward gly residues. A disordered region spans residues 1 to 31 (MSGPRSGSGSGGSTGRPGDAESRRSAYEKEA). Basic and acidic residues predominate over residues 18 to 31 (GDAESRRSAYEKEA). Positions 18-106 (GDAESRRSAY…LKEEVDRLAQ (89 aa)) form a coiled coil. An ATP-binding site is contributed by 289 to 294 (GCGKTL). The tract at residues 600–601 (YL) is docks into pockets in the proteasome alpha-ring.

This sequence belongs to the AAA ATPase family. Homohexamer. Assembles into a hexameric ring structure that caps the 20S proteasome core. Strongly interacts with the prokaryotic ubiquitin-like protein Pup through a hydrophobic interface; the interacting region of ARC lies in its N-terminal coiled-coil domain. There is one Pup binding site per ARC hexamer ring. Upon ATP-binding, the C-terminus of ARC interacts with the alpha-rings of the proteasome core, possibly by binding to the intersubunit pockets.

It participates in protein degradation; proteasomal Pup-dependent pathway. In terms of biological role, ATPase which is responsible for recognizing, binding, unfolding and translocation of pupylated proteins into the bacterial 20S proteasome core particle. May be essential for opening the gate of the 20S proteasome via an interaction with its C-terminus, thereby allowing substrate entry and access to the site of proteolysis. Thus, the C-termini of the proteasomal ATPase may function like a 'key in a lock' to induce gate opening and therefore regulate proteolysis. This Frankia alni (strain DSM 45986 / CECT 9034 / ACN14a) protein is Proteasome-associated ATPase.